A 326-amino-acid chain; its full sequence is Homoserine kinase (326 aa).

It belongs to the pseudomonas-type ThrB family.

It carries out the reaction L-homoserine + ATP = O-phospho-L-homoserine + ADP + H(+). It participates in amino-acid biosynthesis; L-threonine biosynthesis; L-threonine from L-aspartate: step 4/5. The protein is Homoserine kinase of Brucella melitensis biotype 1 (strain ATCC 23456 / CCUG 17765 / NCTC 10094 / 16M).